The primary structure comprises 971 residues: Zinc finger CCCH domain-containing protein 7A (971 aa).

TPR repeat units follow at residues 43-76 (VRNL…ADYA), 89-122 (EKLY…NASN), and 124-156 (KALY…VPQD). The residue at position 210 (Thr210) is a Phosphothreonine. 2 C3H1-type zinc fingers span residues 634–656 (LCRH…HSLV) and 769–797 (PLQF…HSPE). The C2H2-type zinc-finger motif lies at 857 to 881 (FHCWMCGKNCNSEKQWQGHISSEKH). The C3H1-type 3 zinc finger occupies 906–928 (ICDRYMNGTCPEGNSCKFAHGNA). A coiled-coil region spans residues 924 to 952 (AHGNAELHEWEERRDALKMKLNKARKDHL).

The protein resides in the nucleus. In terms of biological role, may be a specific regulator of miRNA biogenesis. Binds to microRNAs MIR7-1, MIR16-2 and MIR29A hairpins recognizing the 3'-ATA(A/T)-5' motif in the apical loop. This is Zinc finger CCCH domain-containing protein 7A (ZC3H7A) from Homo sapiens (Human).